Consider the following 376-residue polypeptide: 4-hydroxy-3-methylbut-2-en-1-yl diphosphate synthase (flavodoxin) (376 aa).

Cysteine 272, cysteine 275, cysteine 307, and glutamate 314 together coordinate [4Fe-4S] cluster.

This sequence belongs to the IspG family. It depends on [4Fe-4S] cluster as a cofactor.

The catalysed reaction is (2E)-4-hydroxy-3-methylbut-2-enyl diphosphate + oxidized [flavodoxin] + H2O + 2 H(+) = 2-C-methyl-D-erythritol 2,4-cyclic diphosphate + reduced [flavodoxin]. The protein operates within isoprenoid biosynthesis; isopentenyl diphosphate biosynthesis via DXP pathway; isopentenyl diphosphate from 1-deoxy-D-xylulose 5-phosphate: step 5/6. Functionally, converts 2C-methyl-D-erythritol 2,4-cyclodiphosphate (ME-2,4cPP) into 1-hydroxy-2-methyl-2-(E)-butenyl 4-diphosphate. This chain is 4-hydroxy-3-methylbut-2-en-1-yl diphosphate synthase (flavodoxin), found in Blochmanniella pennsylvanica (strain BPEN).